The chain runs to 178 residues: Alkyl hydroperoxide reductase AhpD (178 aa).

Cys130 functions as the Proton donor in the catalytic mechanism. Cys130 and Cys133 are oxidised to a cystine. The active-site Cysteine sulfenic acid (-SOH) intermediate is Cys133.

This sequence belongs to the AhpD family. In terms of assembly, homotrimer.

The enzyme catalyses N(6)-[(R)-dihydrolipoyl]-L-lysyl-[lipoyl-carrier protein] + a hydroperoxide = N(6)-[(R)-lipoyl]-L-lysyl-[lipoyl-carrier protein] + an alcohol + H2O. Its function is as follows. Antioxidant protein with alkyl hydroperoxidase activity. Required for the reduction of the AhpC active site cysteine residues and for the regeneration of the AhpC enzyme activity. This Mycolicibacterium paratuberculosis (strain ATCC BAA-968 / K-10) (Mycobacterium paratuberculosis) protein is Alkyl hydroperoxide reductase AhpD.